Here is a 1025-residue protein sequence, read N- to C-terminus: Probable beta-galactosidase B (1025 aa).

The N-terminal stretch at 1–21 is a signal peptide; that stretch reads MATAFWLLLFLLGSLHVLTAA. The N-linked (GlcNAc...) asparagine glycan is linked to Asn23. Tyr90 is a binding site for substrate. N-linked (GlcNAc...) asparagine glycosylation is present at Asn100. Asn135, Ala136, Glu137, and Asn195 together coordinate substrate. Glu196 acts as the Proton donor in catalysis. N-linked (GlcNAc...) asparagine glycosylation is present at Asn211. Tyr265 lines the substrate pocket. A disulfide bond links Cys271 and Cys324. The active-site Nucleophile is the Glu308. Residue Tyr373 participates in substrate binding. N-linked (GlcNAc...) asparagine glycans are attached at residues Asn411, Asn456, Asn736, Asn776, Asn884, Asn925, and Asn926.

The protein belongs to the glycosyl hydrolase 35 family.

Its subcellular location is the secreted. The enzyme catalyses Hydrolysis of terminal non-reducing beta-D-galactose residues in beta-D-galactosides.. Functionally, cleaves beta-linked terminal galactosyl residues from gangliosides, glycoproteins, and glycosaminoglycans. The sequence is that of Probable beta-galactosidase B (lacB) from Emericella nidulans (strain FGSC A4 / ATCC 38163 / CBS 112.46 / NRRL 194 / M139) (Aspergillus nidulans).